A 616-amino-acid chain; its full sequence is Dihydroxy-acid dehydratase (616 aa).

A Mg(2+)-binding site is contributed by Asp-81. Cys-122 provides a ligand contact to [2Fe-2S] cluster. Mg(2+) is bound by residues Asp-123 and Lys-124. At Lys-124 the chain carries N6-carboxylysine. Cys-195 is a [2Fe-2S] cluster binding site. Residue Glu-491 coordinates Mg(2+). The active-site Proton acceptor is the Ser-517.

Belongs to the IlvD/Edd family. As to quaternary structure, homodimer. The cofactor is [2Fe-2S] cluster. Requires Mg(2+) as cofactor.

It carries out the reaction (2R)-2,3-dihydroxy-3-methylbutanoate = 3-methyl-2-oxobutanoate + H2O. The catalysed reaction is (2R,3R)-2,3-dihydroxy-3-methylpentanoate = (S)-3-methyl-2-oxopentanoate + H2O. Its pathway is amino-acid biosynthesis; L-isoleucine biosynthesis; L-isoleucine from 2-oxobutanoate: step 3/4. It functions in the pathway amino-acid biosynthesis; L-valine biosynthesis; L-valine from pyruvate: step 3/4. In terms of biological role, functions in the biosynthesis of branched-chain amino acids. Catalyzes the dehydration of (2R,3R)-2,3-dihydroxy-3-methylpentanoate (2,3-dihydroxy-3-methylvalerate) into 2-oxo-3-methylpentanoate (2-oxo-3-methylvalerate) and of (2R)-2,3-dihydroxy-3-methylbutanoate (2,3-dihydroxyisovalerate) into 2-oxo-3-methylbutanoate (2-oxoisovalerate), the penultimate precursor to L-isoleucine and L-valine, respectively. This chain is Dihydroxy-acid dehydratase, found in Salmonella agona (strain SL483).